Here is a 326-residue protein sequence, read N- to C-terminus: Zinc finger protein 830 (326 aa).

Over residues 1 to 11 (MAASRKGKAVK) the composition is skewed to basic residues. The tract at residues 1–37 (MAASRKGKAVKAVKQEDLRRLMQETRRDSGRQKRVES) is disordered. Basic and acidic residues predominate over residues 13 to 36 (VKQEDLRRLMQETRRDSGRQKRVE). The C2H2-type zinc-finger motif lies at 50–72 (CALCDAPVKNALLWQTHVLGKQH). Residues 83–108 (TAPAHTPAPAHTPAHTPAAASSSSST) are compositionally biased toward low complexity. Disordered stretches follow at residues 83–214 (TAPA…PVRD), 237–257 (EMRQVNSASDAIVAEDDEEGR), and 276–309 (EELRAKQETARSRRRSQRREEEPMQEEEPLEEEE). A compositionally biased stretch (polar residues) spans 180–195 (HSGSVSKAEQQESQEP). Positions 224-295 (KDQLEREWEE…RSRRRSQRRE (72 aa)) form a coiled coil. Positions 276-286 (EELRAKQETAR) are enriched in basic and acidic residues. Over residues 298 to 309 (PMQEEEPLEEEE) the composition is skewed to acidic residues.

Its subcellular location is the nucleus. It is found in the chromosome. The protein resides in the nucleus speckle. May act as an important regulator of the cell cycle that participates in the maintenance of genome integrity. This Danio rerio (Zebrafish) protein is Zinc finger protein 830.